We begin with the raw amino-acid sequence, 43 residues long: Oxygen-evolving enhancer protein 2 (43 aa).

This sequence belongs to the PsbP family.

It localises to the plastid. It is found in the chloroplast thylakoid membrane. In terms of biological role, may be involved in the regulation of photosystem II. The polypeptide is Oxygen-evolving enhancer protein 2 (Physcomitrium patens (Spreading-leaved earth moss)).